The chain runs to 500 residues: NAD(P)H-quinone oxidoreductase chain 4, chloroplastic (500 aa).

Helical transmembrane passes span 4–24 (FPWL…MLFL), 35–55 (YTIC…CYNF), 87–107 (IGTI…AFPV), 113–130 (LFHF…GSFS), 134–154 (LLLF…LLSM), 167–187 (FILY…GISL), 211–231 (IILY…IPLH), 242–262 (HYST…YGLV), 272–292 (AHSM…IYAA), 305–325 (IAYS…SITD), 330–350 (GAIL…FLAG), 386–406 (LALP…GIIT), 416–436 (ILII…LLSM), and 466–486 (ISSL…LALA).

Belongs to the complex I subunit 4 family.

The protein resides in the plastid. It localises to the chloroplast thylakoid membrane. The enzyme catalyses a plastoquinone + NADH + (n+1) H(+)(in) = a plastoquinol + NAD(+) + n H(+)(out). The catalysed reaction is a plastoquinone + NADPH + (n+1) H(+)(in) = a plastoquinol + NADP(+) + n H(+)(out). This Aethionema grandiflorum (Persian stone-cress) protein is NAD(P)H-quinone oxidoreductase chain 4, chloroplastic.